We begin with the raw amino-acid sequence, 131 residues long: UPF0102 protein YraN (131 aa).

A compositionally biased stretch (polar residues) spans 1–19 (MATVPTRSGSPRQLTTKQT). Residues 1–20 (MATVPTRSGSPRQLTTKQTG) form a disordered region.

Belongs to the UPF0102 family.

This chain is UPF0102 protein YraN, found in Escherichia coli O8 (strain IAI1).